Consider the following 150-residue polypeptide: MLGTALRRCAVAAASRAGPRGLQHPAPVPGPTAAIQSIRCYSHGSHETDEEFDARWVTYFNKPDIDAWELRKGMNTLVGYDLVPEPKIIDAALRACRRLNDFASAVRILEVVKDKAGPHKEIYPYVIQELRPTLNELGISTPEELGLDKV.

A mitochondrion-targeting transit peptide spans 1–41 (MLGTALRRCAVAAASRAGPRGLQHPAPVPGPTAAIQSIRCY). The SIFI-degron motif lies at 2–17 (LGTALRRCAVAAASRA). Residues Lys87 and Lys113 each carry the N6-acetyllysine modification. At Thr141 the chain carries Phosphothreonine.

Belongs to the cytochrome c oxidase subunit 5A family. In terms of assembly, component of the cytochrome c oxidase (complex IV, CIV), a multisubunit enzyme composed of 14 subunits. The complex is composed of a catalytic core of 3 subunits MT-CO1, MT-CO2 and MT-CO3, encoded in the mitochondrial DNA, and 11 supernumerary subunits COX4I, COX5A, COX5B, COX6A, COX6B, COX6C, COX7A, COX7B, COX7C, COX8 and NDUFA4, which are encoded in the nuclear genome. The complex exists as a monomer or a dimer and forms supercomplexes (SCs) in the inner mitochondrial membrane with NADH-ubiquinone oxidoreductase (complex I, CI) and ubiquinol-cytochrome c oxidoreductase (cytochrome b-c1 complex, complex III, CIII), resulting in different assemblies (supercomplex SCI(1)III(2)IV(1) and megacomplex MCI(2)III(2)IV(2)). Interacts with AFG1L. Interacts with RAB5IF. Post-translationally, in response to mitochondrial stress, the precursor protein is ubiquitinated by the SIFI complex in the cytoplasm before mitochondrial import, leading to its degradation. Within the SIFI complex, UBR4 initiates ubiquitin chain that are further elongated or branched by KCMF1.

Its subcellular location is the mitochondrion inner membrane. It participates in energy metabolism; oxidative phosphorylation. Its function is as follows. Component of the cytochrome c oxidase, the last enzyme in the mitochondrial electron transport chain which drives oxidative phosphorylation. The respiratory chain contains 3 multisubunit complexes succinate dehydrogenase (complex II, CII), ubiquinol-cytochrome c oxidoreductase (cytochrome b-c1 complex, complex III, CIII) and cytochrome c oxidase (complex IV, CIV), that cooperate to transfer electrons derived from NADH and succinate to molecular oxygen, creating an electrochemical gradient over the inner membrane that drives transmembrane transport and the ATP synthase. Cytochrome c oxidase is the component of the respiratory chain that catalyzes the reduction of oxygen to water. Electrons originating from reduced cytochrome c in the intermembrane space (IMS) are transferred via the dinuclear copper A center (CU(A)) of subunit 2 and heme A of subunit 1 to the active site in subunit 1, a binuclear center (BNC) formed by heme A3 and copper B (CU(B)). The BNC reduces molecular oxygen to 2 water molecules using 4 electrons from cytochrome c in the IMS and 4 protons from the mitochondrial matrix. The chain is Cytochrome c oxidase subunit 5A, mitochondrial (COX5A) from Nycticebus coucang (Slow loris).